A 523-amino-acid chain; its full sequence is 2-isopropylmalate synthase (523 aa).

In terms of domain architecture, Pyruvate carboxyltransferase spans valine 5–tryptophan 267. Residues aspartate 14, histidine 202, histidine 204, and asparagine 238 each coordinate Mn(2+). Positions arginine 392 to valine 523 are regulatory domain.

The protein belongs to the alpha-IPM synthase/homocitrate synthase family. LeuA type 1 subfamily. In terms of assembly, homodimer. Requires Mn(2+) as cofactor.

The protein localises to the cytoplasm. The enzyme catalyses 3-methyl-2-oxobutanoate + acetyl-CoA + H2O = (2S)-2-isopropylmalate + CoA + H(+). It functions in the pathway amino-acid biosynthesis; L-leucine biosynthesis; L-leucine from 3-methyl-2-oxobutanoate: step 1/4. Catalyzes the condensation of the acetyl group of acetyl-CoA with 3-methyl-2-oxobutanoate (2-ketoisovalerate) to form 3-carboxy-3-hydroxy-4-methylpentanoate (2-isopropylmalate). The sequence is that of 2-isopropylmalate synthase from Klebsiella pneumoniae (strain 342).